Consider the following 281-residue polypeptide: Carbonic anhydrase (281 aa).

Positions 106, 161, and 164 each coordinate Zn(2+).

The protein belongs to the beta-class carbonic anhydrase family. Requires Zn(2+) as cofactor.

The protein localises to the cytoplasm. Its subcellular location is the nucleus. It localises to the mitochondrion intermembrane space. It catalyses the reaction hydrogencarbonate + H(+) = CO2 + H2O. With respect to regulation, amines and amino acids act as activators of catalytic activity, whereas natural product-based phenols, dithiocarbamates, aliphatic and aromatic carboxylates, boronic acids, and sulfonamides act as inhibitors of enzymatic activity. Also inhibited by anions such as cyanide and carbonate, and to a lesser extent by sulfate, phenylboronic, and phenyl arsonic acid. Catalyzes the reversible hydration of CO(2) to H(2)CO(3). The main role may be to provide inorganic carbon for the bicarbonate-dependent carboxylation reactions catalyzed by pyruvate carboxylase, acetyl-CoA carboxylase and carbamoyl-phosphate synthetase. Involved in protection against oxidative damage. Acts as a CO(2) chemosensor and induces CO(2)-mediated filamentation. Essential for pathological growth in niches where sufficient CO(2) is not supplied by the host. Necessary for white-to-opaque switching at low CO(2) concentrations. The sequence is that of Carbonic anhydrase (NCE103) from Candida albicans (strain SC5314 / ATCC MYA-2876) (Yeast).